Reading from the N-terminus, the 478-residue chain is Calcium/calmodulin-dependent protein kinase type II subunit alpha (478 aa).

Phosphotyrosine is present on Tyr13. A Protein kinase domain is found at 13–271; that stretch reads YQLFEELGKG…AAEALKHPWI (259 aa). ATP-binding positions include 19 to 27 and Lys42; that span reads LGKGAFSVV. Asp135 (proton acceptor) is an active-site residue. Ser257 carries the post-translational modification Phosphoserine. A Phosphothreonine; by autocatalysis modification is found at Thr286. A calmodulin-binding region spans residues 290 to 300; sequence LKKFNARRKLK. Residues 310–320 form an interaction with BAALC region; it reads TRNFSGGKSGG. The disordered stretch occupies residues 314–341; that stretch reads SGGKSGGNKKSDGVKESSESTNTTIEDE. Positions 322 to 331 are enriched in basic and acidic residues; the sequence is KKSDGVKESS. A phosphoserine mark is found at Ser330, Ser331, and Ser333. Phosphothreonine is present on residues Thr336 and Thr337. Phosphoserine is present on Ser404.

The protein belongs to the protein kinase superfamily. CAMK Ser/Thr protein kinase family. CaMK subfamily. There are 4 genes encoding calcium/calmodulin-dependent protein kinase type II chains: CAMK2A, CAMK2B, CAMK2G and CAMK2D. The corresponding proteins assemble into homo- or heteromultimeric holoenzymes composed of 12 subunits with two hexameric rings stacked one on top of the other. Interacts with BAALC. Interacts with MPDZ. Interacts with SYN1. Interacts with CAMK2N2. Interacts with SYNGAP1. Interacts with SYNPO2. Interacts with SHANK3. Interacts with GRIN2B. Interacts with CACNB2. Interacts with LRRC7. Interacts with GRM5. Interacts with DAGLA (via C-terminal); this interaction is enhanced by autophosphorylation of CAMK2A at Thr-286. Interacts with CAMK2N1; this interaction requires CAMK2A activation by Ca(2+). The cofactor is Mg(2+). In terms of processing, autophosphorylation of Thr-286 following activation by Ca(2+)/calmodulin. Phosphorylation of Thr-286 locks the kinase into an activated state. Palmitoylated. Probably palmitoylated by ZDHHC3 and ZDHHC7.

It is found in the synapse. It localises to the postsynaptic density. The protein resides in the cell projection. The protein localises to the dendritic spine. Its subcellular location is the dendrite. The enzyme catalyses L-seryl-[protein] + ATP = O-phospho-L-seryl-[protein] + ADP + H(+). The catalysed reaction is L-threonyl-[protein] + ATP = O-phospho-L-threonyl-[protein] + ADP + H(+). With respect to regulation, activated by Ca(2+)/calmodulin. Binding of calmodulin results in conformational change that relieves intrasteric autoinhibition and allows autophosphorylation of Thr-286 which turns the kinase in a constitutively active form and confers to the kinase a Ca(2+)-independent activity. Calcium/calmodulin-dependent protein kinase that functions autonomously after Ca(2+)/calmodulin-binding and autophosphorylation, and is involved in various processes, such as synaptic plasticity, neurotransmitter release and long-term potentiation. Member of the NMDAR signaling complex in excitatory synapses, it regulates NMDAR-dependent potentiation of the AMPAR and therefore excitatory synaptic transmission. Regulates dendritic spine development. Also regulates the migration of developing neurons. Phosphorylates the transcription factor FOXO3 to activate its transcriptional activity. Phosphorylates the transcription factor ETS1 in response to calcium signaling, thereby decreasing ETS1 affinity for DNA. In response to interferon-gamma (IFN-gamma) stimulation, catalyzes phosphorylation of STAT1, stimulating the JAK-STAT signaling pathway. In response to interferon-beta (IFN-beta) stimulation, stimulates the JAK-STAT signaling pathway. Acts as a negative regulator of 2-arachidonoylglycerol (2-AG)-mediated synaptic signaling via modulation of DAGLA activity. The polypeptide is Calcium/calmodulin-dependent protein kinase type II subunit alpha (CAMK2A) (Pongo abelii (Sumatran orangutan)).